A 218-amino-acid polypeptide reads, in one-letter code: Methylthioribulose-1-phosphate dehydratase (218 aa).

Residues His-107 and His-109 each coordinate Zn(2+).

This sequence belongs to the aldolase class II family. MtnB subfamily. The cofactor is Zn(2+).

The enzyme catalyses 5-(methylsulfanyl)-D-ribulose 1-phosphate = 5-methylsulfanyl-2,3-dioxopentyl phosphate + H2O. It functions in the pathway amino-acid biosynthesis; L-methionine biosynthesis via salvage pathway; L-methionine from S-methyl-5-thio-alpha-D-ribose 1-phosphate: step 2/6. Functionally, catalyzes the dehydration of methylthioribulose-1-phosphate (MTRu-1-P) into 2,3-diketo-5-methylthiopentyl-1-phosphate (DK-MTP-1-P). The polypeptide is Methylthioribulose-1-phosphate dehydratase (Xylella fastidiosa (strain Temecula1 / ATCC 700964)).